The chain runs to 365 residues: tRNA/tmRNA (uracil-C(5))-methyltransferase (365 aa).

Gln-189, Tyr-217, Asn-222, Glu-238, and Asp-298 together coordinate S-adenosyl-L-methionine. Residue Cys-323 is the Nucleophile of the active site. Residue Glu-357 is the Proton acceptor of the active site.

This sequence belongs to the class I-like SAM-binding methyltransferase superfamily. RNA M5U methyltransferase family. TrmA subfamily.

It carries out the reaction uridine(54) in tRNA + S-adenosyl-L-methionine = 5-methyluridine(54) in tRNA + S-adenosyl-L-homocysteine + H(+). The enzyme catalyses uridine(341) in tmRNA + S-adenosyl-L-methionine = 5-methyluridine(341) in tmRNA + S-adenosyl-L-homocysteine + H(+). Functionally, dual-specificity methyltransferase that catalyzes the formation of 5-methyluridine at position 54 (m5U54) in all tRNAs, and that of position 341 (m5U341) in tmRNA (transfer-mRNA). The chain is tRNA/tmRNA (uracil-C(5))-methyltransferase from Shewanella amazonensis (strain ATCC BAA-1098 / SB2B).